The following is a 259-amino-acid chain: MDLVTYQTIKVRFQASVCYITFHRPEANNTINDTLIEECLQVLNQCETSTVTVVVLEGLPEVFCFGADFQEIYQEMKRGRKQASSQEPLYDLWMKLQTGPYVTISHVRGKVNAGGLGFVSATDIAIADQTASFSLSELLFGLYPACVLPFLIRRIGRQKAHYMTLMTKPISVQEASEWGLIDAFDAESDVLLRKHLLRLRRLNKKGIAHYKQFMSSLDHQVSRAKATALTANQDMFSDPQNQMGIIRYVETGQFPWEDQ.

Active-site residues include Asp-68 and Glu-137.

Belongs to the enoyl-CoA hydratase/isomerase family.

It localises to the cytoplasm. Its pathway is antibiotic biosynthesis; bacillaene biosynthesis. Functionally, involved in some intermediate steps for the synthesis of the antibiotic polyketide bacillaene which is involved in secondary metabolism. Catalyzes the dehydration of the (S)-3-hydroxy-3-methylglutaryl group tethered to PksL to a 3-methylglutaconyl moiety. The sequence is that of Bacillaene synthase dehydratase PksH (pksH) from Bacillus subtilis (strain 168).